Consider the following 338-residue polypeptide: MTTLRLLISDSYDPWFNLAVEECIFRQMPATQRVLFLWRNADTVVIGRAQNPWKECNTRRMEEDNVRLARRSSGGGAVFHDLGNTCFTFMAGKPEYDKTISTHIVLAALNSLGVMADASGRNDLVVKTPDGDRKVSGSAYRETKDRGFHHGTLLLNADLSRLANYLNPDKKKLAAKGITSVRSRVANLTELLPGITHEQVCQAVTEAFFAHYGERVDAEVISPDKTPDLPNFAETFARQSSWEWNFGQAPAFSHLLDERFTWGGVELHFDVEKGVITRAQAFTDSLNPAPLEALGERLQGCQYRVDVLEQACESLIAEFPAQKGELRELAAWMAQAVR.

Residues 29 to 216 form the BPL/LPL catalytic domain; that stretch reads PATQRVLFLW…AFFAHYGERV (188 aa). ATP-binding positions include arginine 71, 76–79, and lysine 134; that span reads GAVF. Lysine 134 contributes to the (R)-lipoate binding site.

Belongs to the LplA family. Monomer.

The protein resides in the cytoplasm. It catalyses the reaction L-lysyl-[lipoyl-carrier protein] + (R)-lipoate + ATP = N(6)-[(R)-lipoyl]-L-lysyl-[lipoyl-carrier protein] + AMP + diphosphate + H(+). Its pathway is protein modification; protein lipoylation via exogenous pathway; protein N(6)-(lipoyl)lysine from lipoate: step 1/2. It functions in the pathway protein modification; protein lipoylation via exogenous pathway; protein N(6)-(lipoyl)lysine from lipoate: step 2/2. Catalyzes both the ATP-dependent activation of exogenously supplied lipoate to lipoyl-AMP and the transfer of the activated lipoyl onto the lipoyl domains of lipoate-dependent enzymes. The protein is Lipoate-protein ligase A of Salmonella paratyphi B (strain ATCC BAA-1250 / SPB7).